A 43-amino-acid chain; its full sequence is Oxygen-evolving enhancer protein 2 (43 aa).

It belongs to the PsbP family.

The protein localises to the plastid. It is found in the chloroplast thylakoid membrane. May be involved in the regulation of photosystem II. The polypeptide is Oxygen-evolving enhancer protein 2 (Physcomitrium patens (Spreading-leaved earth moss)).